A 633-amino-acid chain; its full sequence is Bifunctional enzyme CysN/CysC (633 aa).

The tract at residues 1–463 (MSHQSDLISE…REERAGRFGQ (463 aa)) is sulfate adenylyltransferase. The tr-type G domain maps to 22–241 (KELLRFLTCG…TVEIAADRNL (220 aa)). The segment at 31 to 38 (GNVDDGKS) is G1. 31–38 (GNVDDGKS) is a GTP binding site. The G2 stretch occupies residues 89–93 (GITID). The G3 stretch occupies residues 110 to 113 (DTPG). Residues 110–114 (DTPGH) and 165–168 (NKMD) each bind GTP. The tract at residues 165–168 (NKMD) is G4. The segment at 204–206 (SAL) is G5. The adenylyl-sulfate kinase stretch occupies residues 464 to 633 (QPATVLFSGL…LDLLRERQAI (170 aa)). 472–479 (GLSGAGKS) serves as a coordination point for ATP.

The protein in the C-terminal section; belongs to the APS kinase family. In the N-terminal section; belongs to the TRAFAC class translation factor GTPase superfamily. Classic translation factor GTPase family. CysN/NodQ subfamily. Heterodimer composed of CysD, the smaller subunit, and CysNC.

The enzyme catalyses sulfate + ATP + H(+) = adenosine 5'-phosphosulfate + diphosphate. The catalysed reaction is adenosine 5'-phosphosulfate + ATP = 3'-phosphoadenylyl sulfate + ADP + H(+). It participates in sulfur metabolism; hydrogen sulfide biosynthesis; sulfite from sulfate: step 1/3. The protein operates within sulfur metabolism; hydrogen sulfide biosynthesis; sulfite from sulfate: step 2/3. With CysD forms the ATP sulfurylase (ATPS) that catalyzes the adenylation of sulfate producing adenosine 5'-phosphosulfate (APS) and diphosphate, the first enzymatic step in sulfur assimilation pathway. APS synthesis involves the formation of a high-energy phosphoric-sulfuric acid anhydride bond driven by GTP hydrolysis by CysN coupled to ATP hydrolysis by CysD. Functionally, APS kinase catalyzes the synthesis of activated sulfate. The chain is Bifunctional enzyme CysN/CysC (cysNC) from Pseudomonas aeruginosa (strain ATCC 15692 / DSM 22644 / CIP 104116 / JCM 14847 / LMG 12228 / 1C / PRS 101 / PAO1).